We begin with the raw amino-acid sequence, 332 residues long: L-lactate dehydrogenase A chain (332 aa).

At Ala2 the chain carries N-acetylalanine. Lys5 carries the post-translational modification N6-acetyllysine; alternate. N6-succinyllysine; alternate is present on Lys5. Lys14 carries the N6-acetyllysine modification. 29–57 (GAVGMACAISILMKDLADELALVDVMEDK) is an NAD(+) binding site. Position 57 is an N6-acetyllysine; alternate (Lys57). A Glycyl lysine isopeptide (Lys-Gly) (interchain with G-Cter in SUMO2); alternate cross-link involves residue Lys57. The residue at position 81 (Lys81) is an N6-acetyllysine. NAD(+) is bound at residue Arg99. Arg106 contacts substrate. Lys118 bears the N6-acetyllysine; alternate mark. Position 118 is an N6-succinyllysine; alternate (Lys118). An N6-acetyllysine modification is found at Lys126. NAD(+) is bound at residue Asn138. Residues Asn138 and Arg169 each coordinate substrate. The Proton acceptor role is filled by His193. Residues Lys224 and Lys232 each carry the N6-acetyllysine modification. Tyr239 carries the post-translational modification Phosphotyrosine. Lys243 is modified (N6-acetyllysine). Thr248 is a substrate binding site. Thr309 is subject to Phosphothreonine. Residue Ser310 is modified to Phosphoserine. Position 318 is an N6-acetyllysine; alternate (Lys318). Lys318 bears the N6-succinyllysine; alternate mark. At Thr322 the chain carries Phosphothreonine.

This sequence belongs to the LDH/MDH superfamily. LDH family. As to quaternary structure, homotetramer. Interacts with PTEN upstream reading frame protein MP31. In terms of processing, ISGylated.

It is found in the cytoplasm. It carries out the reaction (S)-lactate + NAD(+) = pyruvate + NADH + H(+). Its pathway is fermentation; pyruvate fermentation to lactate; (S)-lactate from pyruvate: step 1/1. Its function is as follows. Interconverts simultaneously and stereospecifically pyruvate and lactate with concomitant interconversion of NADH and NAD(+). The protein is L-lactate dehydrogenase A chain (LDHA) of Oryctolagus cuniculus (Rabbit).